Reading from the N-terminus, the 441-residue chain is Probable D-serine dehydratase (441 aa).

Lys117 carries the post-translational modification N6-(pyridoxal phosphate)lysine.

The protein belongs to the serine/threonine dehydratase family. DsdA subfamily. It depends on pyridoxal 5'-phosphate as a cofactor.

It carries out the reaction D-serine = pyruvate + NH4(+). The sequence is that of Probable D-serine dehydratase from Acinetobacter baylyi (strain ATCC 33305 / BD413 / ADP1).